Consider the following 118-residue polypeptide: Small ribosomal subunit protein uS13 (118 aa).

Positions Gly-94 to Lys-118 are disordered.

This sequence belongs to the universal ribosomal protein uS13 family. As to quaternary structure, part of the 30S ribosomal subunit. Forms a loose heterodimer with protein S19. Forms two bridges to the 50S subunit in the 70S ribosome.

In terms of biological role, located at the top of the head of the 30S subunit, it contacts several helices of the 16S rRNA. In the 70S ribosome it contacts the 23S rRNA (bridge B1a) and protein L5 of the 50S subunit (bridge B1b), connecting the 2 subunits; these bridges are implicated in subunit movement. Contacts the tRNAs in the A and P-sites. The sequence is that of Small ribosomal subunit protein uS13 from Stenotrophomonas maltophilia (strain R551-3).